A 90-amino-acid polypeptide reads, in one-letter code: MHYNAEQKSKIILKFGFNNIKNTGITEVQVALLTQRINALKSHFNKHKQDHHSRRGLLHIVTRRRKLLKYLKKSSVLRYNNLIESLALRH.

The protein belongs to the universal ribosomal protein uS15 family. In terms of assembly, part of the 30S ribosomal subunit. Forms a bridge to the 50S subunit in the 70S ribosome, contacting the 23S rRNA.

Its function is as follows. One of the primary rRNA binding proteins, it binds directly to 16S rRNA where it helps nucleate assembly of the platform of the 30S subunit by binding and bridging several RNA helices of the 16S rRNA. In terms of biological role, forms an intersubunit bridge (bridge B4) with the 23S rRNA of the 50S subunit in the ribosome. The sequence is that of Small ribosomal subunit protein uS15 from Blochmanniella floridana.